Consider the following 152-residue polypeptide: MHCPFCNAADSKVIDSRLAAEGCQIRRRRECVSCGERFTTFESYEVVMPRVIKSNGKNEPFDEAKLRRSLMHALQKRPVTQEQIETVLSDIQLQIRRLGERDVKSRTIGEIVMQSLFALDHVAYVRFASVYQDFQDVEAFRRQIEQMQQREH.

A zinc finger spans residues 3–34 (CPFCNAADSKVIDSRLAAEGCQIRRRRECVSC). The ATP-cone domain occupies 49 to 139 (PRVIKSNGKN…VYQDFQDVEA (91 aa)).

The protein belongs to the NrdR family. Requires Zn(2+) as cofactor.

Functionally, negatively regulates transcription of bacterial ribonucleotide reductase nrd genes and operons by binding to NrdR-boxes. The sequence is that of Transcriptional repressor NrdR from Acinetobacter baumannii (strain AB0057).